The chain runs to 200 residues: 3-isopropylmalate dehydratase small subunit (200 aa).

It belongs to the LeuD family. LeuD type 1 subfamily. In terms of assembly, heterodimer of LeuC and LeuD.

The enzyme catalyses (2R,3S)-3-isopropylmalate = (2S)-2-isopropylmalate. Its pathway is amino-acid biosynthesis; L-leucine biosynthesis; L-leucine from 3-methyl-2-oxobutanoate: step 2/4. Its function is as follows. Catalyzes the isomerization between 2-isopropylmalate and 3-isopropylmalate, via the formation of 2-isopropylmaleate. The protein is 3-isopropylmalate dehydratase small subunit of Aliivibrio salmonicida (strain LFI1238) (Vibrio salmonicida (strain LFI1238)).